A 629-amino-acid polypeptide reads, in one-letter code: Ionotropic receptor 75a (629 aa).

Residues 1 to 335 (MQLVQLANFV…GDVFLQPFSP (335 aa)) are Extracellular-facing. Asn61, Asn112, Asn126, Asn144, Asn166, and Asn232 each carry an N-linked (GlcNAc...) asparagine glycan. Residues 336 to 356 (LVWYLFGGVLSLIGVLLWITF) traverse the membrane as a helical segment. The Cytoplasmic segment spans residues 357–374 (YMECKRMQKRWRLDYLPS). Residues 375 to 395 (LLSTFLISFGAACIQSSSLIP) traverse the membrane as a helical segment. The Extracellular segment spans residues 396–402 (RSAGGRL). A helical membrane pass occupies residues 403–423 (IYFALFLISFIMYNYYTSVVV). Over 424 to 592 (SSLLSSPVKS…NFVITVGMEY (169 aa)) the chain is Cytoplasmic. A helical membrane pass occupies residues 593–613 (VAPLLLMLICADILVVVILLV). Residues 614–629 (ELAWKRFFTRHLTFHP) are Extracellular-facing.

This sequence belongs to the glutamate-gated ion channel (TC 1.A.10.1) family. In terms of tissue distribution, expressed in acetic-acid-sensing neurons in the antennal coeloconic 2 (ac2) and antennal coeloconic 3 (ac3) sensilla class of sensory hairs (at protein level).

It is found in the cell membrane. The protein localises to the cell projection. Its subcellular location is the dendrite. Odorant receptor for acetic and propionic acid. Functions as part of an olfactory receptor complex including the ionotropic receptor coreceptor Ir8a. In Drosophila melanogaster (Fruit fly), this protein is Ionotropic receptor 75a.